A 462-amino-acid chain; its full sequence is GTPase Der (462 aa).

EngA-type G domains lie at 2–164 (KKIA…PKKE) and 195–366 (INVA…KNYS). Residues 8–15 (GKPNVGKS), 55–59 (DTGGI), 116–119 (NKID), 201–208 (GRVNVGKS), 248–252 (DTAGI), and 312–315 (NKWD) contribute to the GTP site. In terms of domain architecture, KH-like spans 367–451 (TWLPTGQLNR…PIILRPRKRG (85 aa)).

The protein belongs to the TRAFAC class TrmE-Era-EngA-EngB-Septin-like GTPase superfamily. EngA (Der) GTPase family. Associates with the 50S ribosomal subunit.

In terms of biological role, GTPase that plays an essential role in the late steps of ribosome biogenesis. The sequence is that of GTPase Der from Nitratiruptor sp. (strain SB155-2).